The chain runs to 460 residues: Kynureninase (460 aa).

Pyridoxal 5'-phosphate contacts are provided by residues Leu-127, Thr-128, 165–168 (FPSD), Asp-249, His-252, and Tyr-274. Lys-275 carries the post-translational modification N6-(pyridoxal phosphate)lysine. Residues Trp-304 and Asn-332 each contribute to the pyridoxal 5'-phosphate site.

It belongs to the kynureninase family. As to quaternary structure, homodimer. Pyridoxal 5'-phosphate serves as cofactor.

It is found in the cytoplasm. The enzyme catalyses L-kynurenine + H2O = anthranilate + L-alanine + H(+). It catalyses the reaction 3-hydroxy-L-kynurenine + H2O = 3-hydroxyanthranilate + L-alanine + H(+). The protein operates within amino-acid degradation; L-kynurenine degradation; L-alanine and anthranilate from L-kynurenine: step 1/1. Its pathway is cofactor biosynthesis; NAD(+) biosynthesis; quinolinate from L-kynurenine: step 2/3. In terms of biological role, catalyzes the cleavage of L-kynurenine (L-Kyn) and L-3-hydroxykynurenine (L-3OHKyn) into anthranilic acid (AA) and 3-hydroxyanthranilic acid (3-OHAA), respectively. The sequence is that of Kynureninase from Monosiga brevicollis (Choanoflagellate).